Consider the following 184-residue polypeptide: Photosystem I assembly protein Ycf4 (184 aa).

2 consecutive transmembrane segments (helical) span residues Phe22–Ser42 and Ile57–Ser77.

This sequence belongs to the Ycf4 family.

The protein localises to the plastid. The protein resides in the chloroplast thylakoid membrane. In terms of biological role, seems to be required for the assembly of the photosystem I complex. The chain is Photosystem I assembly protein Ycf4 from Lactuca sativa (Garden lettuce).